Reading from the N-terminus, the 83-residue chain is Sec-independent protein translocase protein TatA (83 aa).

Residues 1 to 21 (MGNMGIWQLLIIAVIVILLFG) form a helical membrane-spanning segment. Basic and acidic residues-rich tracts occupy residues 47–57 (EEKKALEETAS) and 71–83 (AEKK…KEQV). Positions 47–83 (EEKKALEETASEKATPSVEKTAPNAEKKTETKDKEQV) are disordered.

Belongs to the TatA/E family. The Tat system comprises two distinct complexes: a TatABC complex, containing multiple copies of TatA, TatB and TatC subunits, and a separate TatA complex, containing only TatA subunits. Substrates initially bind to the TatABC complex, which probably triggers association of the separate TatA complex to form the active translocon.

It is found in the cell inner membrane. Functionally, part of the twin-arginine translocation (Tat) system that transports large folded proteins containing a characteristic twin-arginine motif in their signal peptide across membranes. TatA could form the protein-conducting channel of the Tat system. The polypeptide is Sec-independent protein translocase protein TatA (Shewanella woodyi (strain ATCC 51908 / MS32)).